Here is a 329-residue protein sequence, read N- to C-terminus: Ribosomal RNA small subunit methyltransferase C (329 aa).

The protein belongs to the methyltransferase superfamily. RsmC family. In terms of assembly, monomer.

The protein localises to the cytoplasm. The catalysed reaction is guanosine(1207) in 16S rRNA + S-adenosyl-L-methionine = N(2)-methylguanosine(1207) in 16S rRNA + S-adenosyl-L-homocysteine + H(+). Specifically methylates the guanine in position 1207 of 16S rRNA in the 30S particle. This chain is Ribosomal RNA small subunit methyltransferase C, found in Actinobacillus pleuropneumoniae serotype 5b (strain L20).